A 146-amino-acid polypeptide reads, in one-letter code: Dual specificity phosphatase Cdc25 (146 aa).

In terms of domain architecture, Rhodanese spans 34–135 (RRPNIAIIDV…WEASGKPVCR (102 aa)). Residue 45-48 (DEER) participates in substrate binding. Histidine 53 is a binding site for Zn(2+). Substrate is bound at residue 68 to 71 (KISH). The active-site Cysteine persulfide intermediate is the cysteine 86. Substrate is bound at residue 90-92 (QVR). Positions 134, 136, and 141 each coordinate Zn(2+).

This sequence belongs to the MPI phosphatase family. In terms of tissue distribution, expressed in roots and at lower levels in shoots (at protein level). Expressed in leaves, stems and flowers.

It is found in the nucleus. The enzyme catalyses O-phospho-L-tyrosyl-[protein] + H2O = L-tyrosyl-[protein] + phosphate. It catalyses the reaction [glutaredoxin]-dithiol + arsenate + glutathione + H(+) = glutathionyl-S-S-[glutaredoxin] + arsenite + H2O. Its activity is regulated as follows. Inhibited by NSC95397. Tyrosine protein phosphatase that dephosphorylates CDK complex and activate its kinase activity in vitro. Functionally, arsenate reductase that plays a major role in the reduction of arsenate to arsenite and arsenic retention in roots. Has an in vitro and in vivo arsenate reductase activity. Plays no role in arsenic metabolism. The chain is Dual specificity phosphatase Cdc25 from Arabidopsis thaliana (Mouse-ear cress).